Reading from the N-terminus, the 488-residue chain is Germacrene A acid 8-beta-hydroxylase (488 aa).

The chain crosses the membrane as a helical; Signal-anchor for type II membrane protein span at residues 2–22; the sequence is ELFTIFSIVVSSLILFTFWSL. N407 carries an N-linked (GlcNAc...) asparagine glycan. C429 is a heme binding site.

It belongs to the cytochrome P450 family. It depends on heme as a cofactor. As to expression, expressed in leaf primordia.

It localises to the membrane. The catalysed reaction is germacra-1(10),4,11(13)-trien-12-oate + reduced [NADPH--hemoprotein reductase] + O2 = 8beta-hydroxygermacra-1(10),4,11(13)-trien-12-oate + oxidized [NADPH--hemoprotein reductase] + H2O + H(+). It functions in the pathway secondary metabolite biosynthesis; terpenoid biosynthesis. Functionally, involved in the biosynthesis of germacrene-derived sesquiterpene lactones. Hydroxylates germacrene A acid to 8-beta-hydroxy-germacrene A acid. Unlike 6-alpha-hydroxy-germacrene A acid, this compound cannot undergo spontaneous lactonization. This is Germacrene A acid 8-beta-hydroxylase from Helianthus annuus (Common sunflower).